Here is a 383-residue protein sequence, read N- to C-terminus: F-box/kelch-repeat protein At4g19330 (383 aa).

A disordered region spans residues 1-27 (MAYLSFKSNMERTPRESNTPCPPPQPS). The 52-residue stretch at 28–79 (PSLFSSLPDDIVLNILARISTSYYQTLSLVSKTFRLLILSKELDMERSYLGT) folds into the F-box domain. Kelch repeat units lie at residues 147–192 (ETYE…VLDG), 193–239 (KLYV…NIQT), and 272–318 (STCE…SEIG).

Involved in seed germination. The chain is F-box/kelch-repeat protein At4g19330 from Arabidopsis thaliana (Mouse-ear cress).